The chain runs to 214 residues: Elongation factor Ts (214 aa).

Residues 80-83 form an involved in Mg(2+) ion dislocation from EF-Tu region; sequence TDFV.

The protein belongs to the EF-Ts family.

Its subcellular location is the cytoplasm. Functionally, associates with the EF-Tu.GDP complex and induces the exchange of GDP to GTP. It remains bound to the aminoacyl-tRNA.EF-Tu.GTP complex up to the GTP hydrolysis stage on the ribosome. The chain is Elongation factor Ts from Syntrophomonas wolfei subsp. wolfei (strain DSM 2245B / Goettingen).